We begin with the raw amino-acid sequence, 218 residues long: Thiopurine S-methyltransferase (218 aa).

Positions 10, 45, 66, and 123 each coordinate S-adenosyl-L-methionine.

Belongs to the class I-like SAM-binding methyltransferase superfamily. TPMT family.

Its subcellular location is the cytoplasm. The enzyme catalyses S-adenosyl-L-methionine + a thiopurine = S-adenosyl-L-homocysteine + a thiopurine S-methylether.. The chain is Thiopurine S-methyltransferase from Azotobacter vinelandii (strain DJ / ATCC BAA-1303).